The sequence spans 476 residues: Sulfate adenylyltransferase subunit 1 (476 aa).

Residues 24-228 (KSLLRFLTCG…MAWYQGPTLL (205 aa)) enclose the tr-type G domain. Residues 33–40 (GSVDDGKS) form a G1 region. 33–40 (GSVDDGKS) provides a ligand contact to GTP. The tract at residues 91-95 (GITID) is G2. The tract at residues 112–115 (DTPG) is G3. GTP contacts are provided by residues 112–116 (DTPGH) and 167–170 (NKMD). Residues 167–170 (NKMD) are G4. The G5 stretch occupies residues 205–207 (SAL).

Belongs to the TRAFAC class translation factor GTPase superfamily. Classic translation factor GTPase family. CysN/NodQ subfamily. As to quaternary structure, heterodimer composed of CysD, the smaller subunit, and CysN.

It carries out the reaction sulfate + ATP + H(+) = adenosine 5'-phosphosulfate + diphosphate. It functions in the pathway sulfur metabolism; hydrogen sulfide biosynthesis; sulfite from sulfate: step 1/3. With CysD forms the ATP sulfurylase (ATPS) that catalyzes the adenylation of sulfate producing adenosine 5'-phosphosulfate (APS) and diphosphate, the first enzymatic step in sulfur assimilation pathway. APS synthesis involves the formation of a high-energy phosphoric-sulfuric acid anhydride bond driven by GTP hydrolysis by CysN coupled to ATP hydrolysis by CysD. The protein is Sulfate adenylyltransferase subunit 1 of Vibrio vulnificus (strain CMCP6).